Reading from the N-terminus, the 173-residue chain is 16S rRNA aminocarboxypropyltransferase (173 aa).

S-adenosyl-L-methionine contacts are provided by Thr-25, Leu-72, Leu-96, and Ser-115.

This sequence belongs to the TDD superfamily. TSR3 family.

The protein localises to the cytoplasm. The enzyme catalyses an N(1)-methylpseudouridine in rRNA + S-adenosyl-L-methionine = N(1)-methyl-N(3)-[(3S)-3-amino-3-carboxypropyl]pseudouridine in rRNA + S-methyl-5'-thioadenosine + H(+). Aminocarboxypropyltransferase that catalyzes the aminocarboxypropyl transfer on pseudouridine corresponding to position 914 in M.jannaschii 16S rRNA. It constitutes the last step in biosynthesis of the hypermodified N1-methyl-N3-(3-amino-3-carboxypropyl) pseudouridine (m1acp3-Psi). This Methanococcoides burtonii (strain DSM 6242 / NBRC 107633 / OCM 468 / ACE-M) protein is 16S rRNA aminocarboxypropyltransferase.